The sequence spans 127 residues: uncharacterized protein (127 aa).

Residues 5-25 (ILGITIAFIILLLTTVAILFS) form a helical membrane-spanning segment.

It localises to the membrane. This is an uncharacterized protein from Mycoplasma genitalium (strain ATCC 33530 / DSM 19775 / NCTC 10195 / G37) (Mycoplasmoides genitalium).